We begin with the raw amino-acid sequence, 650 residues long: p-hydroxybenzoic acid efflux pump subunit AaeB (650 aa).

11 helical membrane-spanning segments follow: residues 7 to 27, 32 to 52, 61 to 81, 87 to 107, 115 to 135, 148 to 168, 365 to 385, 402 to 422, 426 to 446, 450 to 470, and 478 to 498; these read FPIK…HLNL, WAVM…GGDP, GILR…IMIA, VVML…SSLI, LGLA…SGGL, EIIL…PRSI, LFWL…LGVI, FVYG…YILP, QSAV…GILI, QIGT…DNPM, and IDNA…ILLI.

This sequence belongs to the aromatic acid exporter ArAE (TC 2.A.85) family.

It is found in the cell inner membrane. Forms an efflux pump with AaeA. Could function as a metabolic relief valve, allowing to eliminate certain compounds when they accumulate to high levels in the cell. This Pantoea ananatis (strain LMG 20103) protein is p-hydroxybenzoic acid efflux pump subunit AaeB.